Reading from the N-terminus, the 2332-residue chain is Genome polyprotein (2332 aa).

The region spanning 1–201 (MNTTDCFIAL…WKAKVQRKLK (201 aa)) is the Peptidase C28 domain. Topologically, residues 1-1480 (MNTTDCFIAL…SFVKRAFKRL (1480 aa)) are cytoplasmic. Residues cysteine 51, histidine 148, and aspartate 163 each act as for leader protease activity in the active site. 2 disordered regions span residues 197-218 (QRKL…QSGN) and 238-265 (QLGD…NTQN). Glycine 202 carries the N-myristoyl glycine; by host lipid modification. Composition is skewed to polar residues over residues 204-218 (GQSS…QSGN) and 238-251 (QLGD…SNEG). The span at 252 to 265 (STDTTSTHTTNTQN) shows a compositional bias: low complexity. Cysteines 406 and 858 form a disulfide. The segment at 788–796 (ALLRASTYY) is antigenic epitope. Positions 869–871 (RGD) match the Cell attachment site motif. The SF3 helicase domain maps to 1189–1353 (NVHIANLCKV…DGYKINSKLD (165 aa)). 1217-1224 (GKSGQGKS) contacts ATP. The stretch at 1481–1501 (KENFEIVALCLTLLANIVIMI) is an intramembrane region. The Cytoplasmic segment spans residues 1502-2332 (RETRKRQKMV…RWVNAVCGDA (831 aa)). Residues 1529-1538 (KTLDEAEKSP) are compositionally biased toward basic and acidic residues. The interval 1529–1584 (KTLDEAEKSPLETSGASTVGFRERTLPGQKACDDVNSEPAQPVEEQPQAEGPYAGP) is disordered. O-(5'-phospho-RNA)-tyrosine is present on residues tyrosine 1581, tyrosine 1604, and tyrosine 1628. The 197-residue stretch at 1652–1848 (APPTDLQKMV…YCSCVSRSML (197 aa)) folds into the Peptidase C3 domain. Histidine 1695 (for protease 3C activity; Proton donor/acceptor) is an active-site residue. Active-site for protease 3C activity residues include aspartate 1733 and cysteine 1812. 2 short sequence motifs (nuclear localization signal) span residues 1878–1886 (MRKTKLAPT) and 1879–1886 (RKTKLAPT). The region spanning 2096-2214 (RNVWDVDYSA…ASDYDLDFEA (119 aa)) is the RdRp catalytic domain. Residue aspartate 2200 is the For RdRp activity of the active site.

This sequence belongs to the picornaviruses polyprotein family. Interacts with host ISG15. As to quaternary structure, interacts (via R-G-D motif) with host ITGAV/ITGB6. Interacts with host MAVS; this interaction inhibits binding of host TRAF3 to MAVS, thereby suppressing interferon-mediated responses. In terms of assembly, forms homooligomers. Homohexamer. Interacts with host VIM. Interacts with host BECN1. As to quaternary structure, interacts with host DCTN3. In terms of assembly, interacts with RNA-dependent RNA polymerase; this interaction allows 3B-1 to binds 2 polymerases and act as a primer. It also allows the recruitment of the RNA-dependent RNA polymerase to host membranes. Interacts with RNA-dependent RNA polymerase; this interaction allows 3B-2 to act as a primer. As to quaternary structure, interacts with RNA-dependent RNA polymerase; this interaction allows 3B-3 to act as a primer. In terms of assembly, interacts with 3B-1; this interaction allows 3B-1 to binds 2 polymerases and act as a primer. It also allows the recruitment of the RNA-dependent RNA polymerase to host membranes. Interacts with 3B-2; this interaction allows 3B-2 to act as a primer. Interacts with 3B-3; this interaction allows 3B-3 to act as a primer. In terms of processing, removes six residues from its own C-terminus, generating sLb(pro). Post-translationally, specific enzymatic cleavages in vivo by the viral proteases yield a variety of precursors and mature proteins. The polyprotein seems to be cotranslationally cleaved at the 2A/2B junction by a ribosomal skip from one codon to the next without formation of a peptide bond. This process would release the L-P1-2A peptide from the translational complex. During virion maturation, immature virions are rendered infectious following cleavage of VP0 into VP4 and VP2. This maturation seems to be an autocatalytic event triggered by the presence of RNA in the capsid and is followed by a conformational change of the particle. In terms of processing, myristoylation is required during RNA encapsidation and formation of the mature virus particle. Post-translationally, uridylylated by the polymerase and covalently linked to the 5'-end of genomic RNA. These uridylylated forms act as a nucleotide-peptide primer for the polymerase. The disulfide bond between VP1 and VP2 occurs after release of virus from the host cell.

It localises to the host nucleus. It is found in the host cytoplasm. The protein localises to the virion. The protein resides in the host endoplasmic reticulum membrane. Its subcellular location is the host cytoplasmic vesicle membrane. It carries out the reaction Autocatalytically cleaves itself from the polyprotein of the foot-and-mouth disease virus by hydrolysis of a Lys-|-Gly bond, but then cleaves host cell initiation factor eIF-4G at bonds -Gly-|-Arg- and -Lys-|-Arg-.. The enzyme catalyses a ribonucleoside 5'-triphosphate + H2O = a ribonucleoside 5'-diphosphate + phosphate + H(+). The catalysed reaction is RNA(n) + a ribonucleoside 5'-triphosphate = RNA(n+1) + diphosphate. It catalyses the reaction Selective cleavage of Gln-|-Gly bond in the poliovirus polyprotein. In other picornavirus reactions Glu may be substituted for Gln, and Ser or Thr for Gly.. Functionally, autocatalytically cleaves itself from the polyprotein at the L/VP0 junction. Also cleaves the host translation initiation factors EIF4G1 and EIF4G3, in order to shut off the capped cellular mRNA transcription. Plays a role in counteracting host innate antiviral response using diverse mechanisms. Possesses a deubiquitinase activity acting on both 'Lys-48' and 'Lys-63'-linked polyubiquitin chains. In turn, inhibits the ubiquitination and subsequent activation of key signaling molecules of type I IFN response such as host RIGI, TBK1, TRAF3 and TRAF6. Inhibits host NF-kappa-B activity by inducing a decrease in RELA mRNA levels. Cleaves a peptide bond in the C-terminus of host ISG15, resulting in the damaging of this modifier that can no longer be attached to target proteins. Also cleaves host G3BP1 and G3BP2 in order to inhibit cytoplasmic stress granules assembly. Its function is as follows. Lies on the inner surface of the capsid shell. After binding to the host receptor, the capsid undergoes conformational changes. Capsid protein VP4 is released, capsid protein VP1 N-terminus is externalized, and together, they shape a pore in the host membrane through which the viral genome is translocated into the host cell cytoplasm. After genome has been released, the channel shrinks. In terms of biological role, forms an icosahedral capsid of pseudo T=3 symmetry with capsid proteins VP1 and VP3. The capsid is composed of 60 copies of each capsid protein organized in the form of twelve pentamers and encloses the viral positive strand RNA genome. Upon acidifcation in the endosome, dissociates into pentamers. Forms an icosahedral capsid of pseudo T=3 symmetry with capsid proteins VP2 and VP3. The capsid is composed of 60 copies of each capsid protein organized in the form of twelve pentamers and encloses the viral positive strand RNA genome. Mediates cell entry by attachment to an integrin receptor, usually host ITGAV/ITGB6, via a conserved arginine-glycine-aspartic acid (R-G-D) motif. In addition, targets host MAVS to suppress type I IFN pathway. Upon acidifcation in the endosome, dissociates into pentamers. Functionally, forms an icosahedral capsid of pseudo T=3 symmetry with capsid proteins VP0 and VP3. The capsid is composed of 60 copies of each capsid protein organized in the form of twelve pentamers and encloses the viral positive strand RNA genome. Upon acidifcation in the endosome, dissociates into pentamers. Its function is as follows. Mediates self-processing of the polyprotein by a translational effect termed 'ribosome skipping'. Mechanistically, 2A-mediated cleavage occurs between the C-terminal glycine and the proline of the downstream protein 2B. In the case of foot-and-mouth disease virus, the 2A oligopeptide is post-translationally 'trimmed' from the C-terminus of the upstream protein 1D by 3C proteinase. In terms of biological role, plays an essential role in the virus replication cycle by acting as a viroporin. Creates a pore in the host endoplasmic reticulum and as a consequence releases Ca2+ in the cytoplasm of infected cell. In turn, high levels of cytoplasmic calcium may trigger membrane trafficking and transport of viral ER-associated proteins to viroplasms, sites of viral genome replication. Associates with and induces structural rearrangements of intracellular membranes. Triggers host autophagy by interacting with host BECN1 and thereby promotes viral replication. Participates in viral replication and interacts with host DHX9. Displays RNA-binding, nucleotide binding and NTPase activities. May play a role in virion morphogenesis and viral RNA encapsidation by interacting with the capsid protein VP3. Functionally, plays important roles in virus replication, virulence and host range. Cooperates with host DDX56 to inhibit IRF3 nuclear translocation and subsequent type I interferon production. Its function is as follows. Covalently linked to the 5'-end of both the positive-strand and negative-strand genomic RNAs. Acts as a genome-linked replication primer. In terms of biological role, cysteine protease that generates mature viral proteins from the precursor polyprotein. In addition to its proteolytic activity, binds to viral RNA and thus influences viral genome replication. RNA and substrate bind cooperatively to the protease. RNA-directed RNA polymerase 3D-POL replicates genomic and antigenomic RNA by recognizing replications specific signals. Covalently attaches UMP to a tyrosine of VPg, which is used to prime RNA synthesis. The positive stranded RNA genome is first replicated at virus induced membranous vesicles, creating a dsRNA genomic replication form. This dsRNA is then used as template to synthesize positive stranded RNA genomes. ss(+)RNA genomes are either translated, replicated or encapsidated. The protein is Genome polyprotein of Bos taurus (Bovine).